Reading from the N-terminus, the 215-residue chain is Adenylate kinase (215 aa).

10 to 15 (GAGKGT) is a binding site for ATP. The segment at 30–59 (STGDMLRAAIKAGTPLGLEAKKIIDEGGLV) is NMP. AMP-binding positions include threonine 31, arginine 36, 57–59 (GLV), 85–88 (GFPR), and glutamine 92. The interval 122-159 (GRRVHLASGRTYHVTYNPPKVEGKDDVTGEDLIQRDDD) is LID. Residues arginine 123 and 132-133 (TY) contribute to the ATP site. 2 residues coordinate AMP: arginine 156 and arginine 167. Glutamine 200 contributes to the ATP binding site.

Belongs to the adenylate kinase family. As to quaternary structure, monomer.

Its subcellular location is the cytoplasm. It catalyses the reaction AMP + ATP = 2 ADP. The protein operates within purine metabolism; AMP biosynthesis via salvage pathway; AMP from ADP: step 1/1. Functionally, catalyzes the reversible transfer of the terminal phosphate group between ATP and AMP. Plays an important role in cellular energy homeostasis and in adenine nucleotide metabolism. In Neisseria meningitidis serogroup C (strain 053442), this protein is Adenylate kinase.